The sequence spans 759 residues: Short transient receptor potential channel 1 (759 aa).

Positions 1 to 30 (MMAALYPSTDLSGVSSSSLPSSPSSSSPNE) are disordered. Topologically, residues 1-311 (MMAALYPSTD…FGQMSGYRRK (311 aa)) are cytoplasmic. A compositionally biased stretch (low complexity) spans 15-28 (SSSSLPSSPSSSSP). ANK repeat units follow at residues 46 to 75 (LNEKLFLLACDKGDYYMVKKILEENSSGDL), 83 to 109 (LGRNAVTITIENESLDILQLLLDYGCQ), and 124 to 146 (MDVAPVILAAHRNNYEILTMLLK). 4 residues coordinate Zn(2+): His-155, Cys-159, Cys-161, and Cys-164. Positions 312-345 (PTCKKIMTVLTVGIFWPVLSLCYLIAPKSQFGRI) form an intramembrane region, discontinuously helical. Residues 346-352 (IHTPFMK) are Cytoplasmic-facing. The helical transmembrane segment at 353 to 370 (FIIHGASYFTFLLLLNLY) threads the bilayer. The Extracellular portion of the chain corresponds to 371 to 388 (SLVYNEDKKNTMGPALER). Residues 389-405 (IDYLLILWIIGMIWSDI) form a helical membrane-spanning segment. The Cytoplasmic segment spans residues 406-421 (KRLWYEGLEDFLEESR). Residues 422–441 (NQLSFVMNSLYLATFALKVV) traverse the membrane as a helical segment. Residues 442–462 (AHNKFHDFADRKDWDAFHPTL) are Extracellular-facing. The helical transmembrane segment at 463–483 (VAEGLFAFANVLSYLRLFFMY) threads the bilayer. At 484-502 (TTSSILGPLQISMGQMLQD) the chain is on the cytoplasmic side. A helical transmembrane segment spans residues 503 to 524 (FGKFLGMFLLVLFSFTIGLTQL). Topologically, residues 525-589 (YDKGYTSKEQ…GEELQSFVGA (65 aa)) are extracellular. Cys-537 and Cys-542 are joined by a disulfide. The chain crosses the membrane as a helical span at residues 590–610 (VIVGTYNVVVVIVLTKLLVAM). Residues 611–759 (LHKSFQLIAN…SKYAMFYPKN (149 aa)) are Cytoplasmic-facing.

Belongs to the transient receptor (TC 1.A.4) family. STrpC subfamily. TRPC1 sub-subfamily. As to quaternary structure, heterotetramer with TRPC4 and/or TRPC5. Forms a heteromeric ion channel with TRPC4, with a 1:3 TRPC1:TRPC4 stoichiometry. Unlike other TRP channel proteins, does not form a homomeric channel. Interacts with TRPC4AP. Interacts with ITPR3. Interacts with MX1 and RNF24. Interacts with FKBP4. Interacts with PLSCR1. Interacts with PKD2L2. Forms a heterotetramer with PKD2 with a 2:2 stoichiometry; has distinct channel properties separate from PKD2 or TRPC1 homomers alone. Activation of PRKCA induces phosphorylation of TRPC1 and subsequent Ca2+ entry into cells. Expressed in brain, hippocampus, amygdala, Purkinje cells and single neurons in the cortex and striatum.

Its subcellular location is the cell membrane. The enzyme catalyses Ca(2+)(in) = Ca(2+)(out). The catalysed reaction is Na(+)(in) = Na(+)(out). It catalyses the reaction Li(+)(in) = Li(+)(out). It carries out the reaction Cs(+)(in) = Cs(+)(out). May be operated by a phosphatidylinositol second messenger system activated by receptor tyrosine kinases or G-protein coupled receptors. Also activated by intracellular calcium store depletion. Functionally, forms a receptor-activated non-selective calcium permeant cation channel. Forms a heteromeric ion channel with TRPC4 or TRPC5 that has reduced calcium permeability compared to the homomeric TRPC4 or TRPC5 channel. Also permeable to monovalent ions including sodium, lithium and cesium ions. The sequence is that of Short transient receptor potential channel 1 (Trpc1) from Rattus norvegicus (Rat).